Consider the following 809-residue polypeptide: G-type lectin S-receptor-like serine/threonine-protein kinase At1g61480 (809 aa).

An N-terminal signal peptide occupies residues 1 to 24 (MGKKRIMFFASLLLITIFLSFSYA). Residues 25–144 (GITRESPLSI…NSGRTLWESF (120 aa)) form the Bulb-type lectin domain. The Extracellular segment spans residues 25–425 (GITRESPLSI…SELGGNKRNK (401 aa)). Residues Asn53, Asn88, Asn94, Asn103, Asn117, Asn134, and Asn236 are each glycosylated (N-linked (GlcNAc...) asparagine). The EGF-like domain occupies 278–314 (PENSCDIYGFCGPFGICVMSVPPKCKCFKGFVPKSIE). 2 cysteine pairs are disulfide-bonded: Cys282-Cys294 and Cys288-Cys302. 2 N-linked (GlcNAc...) asparagine glycosylation sites follow: Asn320 and Asn375. Residues 333-415 (CQGNTNGKTV…GEILSIRLAS (83 aa)) form the PAN domain. Cystine bridges form between Cys368–Cys389 and Cys372–Cys378. Residues 426–446 (IIVASIVSLSLFVILAFAAFC) traverse the membrane as a helical segment. Over 447 to 809 (FLRYKVKHTV…EMTQSVILGR (363 aa)) the chain is Cytoplasmic. One can recognise a Protein kinase domain in the interval 496 to 781 (FSLSNKLGQG…DLTSPKQPTF (286 aa)). Residues 502-510 (LGQGGFGSV) and Lys524 contribute to the ATP site. Ser530 and Ser545 each carry phosphoserine. The tract at residues 585–602 (RKRLEIDWPKRFNIIEGI) is caM-binding. Catalysis depends on Asp621, which acts as the Proton acceptor. Phosphoserine occurs at positions 625 and 638. Thr655 is subject to Phosphothreonine. 2 positions are modified to phosphoserine: Ser698 and Ser792.

This sequence belongs to the protein kinase superfamily. Ser/Thr protein kinase family.

The protein localises to the cell membrane. The enzyme catalyses L-seryl-[protein] + ATP = O-phospho-L-seryl-[protein] + ADP + H(+). It carries out the reaction L-threonyl-[protein] + ATP = O-phospho-L-threonyl-[protein] + ADP + H(+). In Arabidopsis thaliana (Mouse-ear cress), this protein is G-type lectin S-receptor-like serine/threonine-protein kinase At1g61480.